The primary structure comprises 506 residues: MMRRLHSSRRFSGSLLALALGLALPLAHAADKPAAGKPAASQPAASKPQGGEQFVDGIAAIVNKDVITMREVQDGVKRAKVDLKERGIQLPDDNVLQKQVLQRLIFDRLERQEADRLGIRVDDAQVTQAINMVASRNKLTPQQLRAEVEKNGLSWDDYRKSLREEIRTDRLRQRTIDNHIIITDAEVDAYLKDQARNPALQPQSAQAPVQEAPAAATGPVMLALGQILVRVPEGASPDTVASLRKKAEDILARLKRGDDFASVAAASSDGPEALEGGVMGVRPIDGWPDLFVKAVSNVPAGQVSGIIQSGNGFHILKVLQRGQAGAPAPARAAAPMPAPAAGRAAQGPVQVTQTHARHILIKTSAVMSDQQARQRLEQVRQRLESGSAKFEDMARQYSQDATAPQGGDLGWVNPGEMVPSFEAAMNSLKPGEISQPVESPFGWHLVQVLERRQKDVTDEMQRMQARQALFERRAGPAFEDWMEQLRAQAYIDNRLEKQERIEQNNR.

An N-terminal signal peptide occupies residues 1 to 29 (MMRRLHSSRRFSGSLLALALGLALPLAHA). PpiC domains follow at residues 219–320 (PVML…KVLQ) and 351–450 (VTQT…QVLE).

Its subcellular location is the periplasm. The catalysed reaction is [protein]-peptidylproline (omega=180) = [protein]-peptidylproline (omega=0). Functionally, chaperone involved in the correct folding and assembly of outer membrane proteins. Recognizes specific patterns of aromatic residues and the orientation of their side chains, which are found more frequently in integral outer membrane proteins. May act in both early periplasmic and late outer membrane-associated steps of protein maturation. This is Chaperone SurA from Bordetella avium (strain 197N).